Consider the following 663-residue polypeptide: Shugoshin 1 (663 aa).

Coiled-coil stretches lie at residues 8–29 (KQAF…RIKK) and 110–132 (DTAE…NLLE). Disordered regions lie at residues 207–250 (RNTA…MNKN), 278–401 (EHTV…LNSG), and 417–478 (FRQN…ARKN). Composition is skewed to basic and acidic residues over residues 231 to 242 (RLEECNNEDKTE), 280 to 304 (TVVE…REID), 339 to 358 (KNKE…KAER), and 366 to 394 (KPWE…KEKM). The span at 427 to 437 (NESSLEISSSE) shows a compositional bias: low complexity. Residues 443–453 (SLYKPYKDKSK) are compositionally biased toward basic and acidic residues.

Belongs to the shugoshin family. Binds microtubules. In terms of processing, ubiquitinated by the anaphase promoting complex (APC) at the onset of anaphase, conducting to its degradation.

It is found in the nucleus. The protein resides in the chromosome. It localises to the centromere. Its subcellular location is the kinetochore. The protein localises to the nucleus speckle. Its function is as follows. Plays a central role in chromosome cohesion during mitosis by preventing premature dissociation of cohesin complex from centromeres after prophase, when most of cohesin complex dissociates from chromosomes arms. May act by preventing phosphorylation of the stag2 subunit of cohesin complex at the centromere, ensuring cohesin persistence at centromere until cohesin cleavage by espl1/separase at anaphase. May regulate kinetochore microtubule stability in mitosis, possibly to sense tension on mitotic chromosomes. The chain is Shugoshin 1 from Xenopus laevis (African clawed frog).